The following is a 452-amino-acid chain: Probable carboxypeptidase ACLA_088580 (452 aa).

An N-terminal signal peptide occupies residues 1 to 18 (MRSLTLLLSLSTALRSVA). Asn-107 and Asn-156 each carry an N-linked (GlcNAc...) asparagine glycan. Position 175 (Asp-175) interacts with Zn(2+). Glu-207 functions as the Proton acceptor in the catalytic mechanism. Glu-208 is a Zn(2+) binding site.

It belongs to the peptidase M20A family. Zn(2+) serves as cofactor.

It is found in the secreted. This chain is Probable carboxypeptidase ACLA_088580, found in Aspergillus clavatus (strain ATCC 1007 / CBS 513.65 / DSM 816 / NCTC 3887 / NRRL 1 / QM 1276 / 107).